The following is a 423-amino-acid chain: MSIQIPRGTQDILPGTVELWQYIEGQAREICRRYNYKEIRTPIFEHTELFLRGVGDTTDIVQKEMYSFQDRGERSLTLRPEGTAPVVRSYVENKMFGDATQPTKLYYIGQMFRYERPQAGRYRQFVQFGIEAIGSNDPAIDAEVIALAVEFYRGMGLKNIKVVLNSLGDAASRQAHRDALIAHFEPRIGEFCSDCQSRLEKNPLRILDCKKDRNHELMGTAPSITEYLNEDSAVYYDKVQELLTMMDVPFEKDPNLVRGLDYYQHTVFEIMSEAEGFGAITTLSGGGRYNGLVQEIGGPEMPGIGFAMSIERLIMALKAENIELPLEHSIDCYVVALGEKAKDHAAKVAFDLRKAGLSVEKDYLDRKMKAQFKSADRLKAKFVAVLGEDELDKGIINLKDMATGEQEEVALDVFASYVAEKLI.

It belongs to the class-II aminoacyl-tRNA synthetase family. In terms of assembly, homodimer.

It localises to the cytoplasm. It catalyses the reaction tRNA(His) + L-histidine + ATP = L-histidyl-tRNA(His) + AMP + diphosphate + H(+). In Bacillus cereus (strain ATCC 14579 / DSM 31 / CCUG 7414 / JCM 2152 / NBRC 15305 / NCIMB 9373 / NCTC 2599 / NRRL B-3711), this protein is Histidine--tRNA ligase 2.